Reading from the N-terminus, the 115-residue chain is Large ribosomal subunit protein bL19 (115 aa).

Belongs to the bacterial ribosomal protein bL19 family.

This protein is located at the 30S-50S ribosomal subunit interface and may play a role in the structure and function of the aminoacyl-tRNA binding site. This is Large ribosomal subunit protein bL19 from Francisella philomiragia subsp. philomiragia (strain ATCC 25017 / CCUG 19701 / FSC 153 / O#319-036).